The sequence spans 415 residues: Acetyl-CoA acetyltransferase 1 (415 aa).

The active-site Acyl-thioester intermediate is cysteine 99. A CoA-binding site is contributed by lysine 239. A K(+)-binding site is contributed by alanine 256. Serine 260 contributes to the CoA binding site. Valine 357 contributes to the K(+) binding site. Catalysis depends on proton acceptor residues histidine 361 and cysteine 391.

The protein belongs to the thiolase-like superfamily. Thiolase family. In terms of tissue distribution, expressed in the vascular system of roots, cotyledons, young leaves, fully expanded leaves, stems, flowers, and funiculi of siliques.

It localises to the cytoplasm. The protein resides in the peroxisome. It catalyses the reaction 2 acetyl-CoA = acetoacetyl-CoA + CoA. The protein operates within metabolic intermediate biosynthesis; (R)-mevalonate biosynthesis; (R)-mevalonate from acetyl-CoA: step 1/3. Its function is as follows. Catalyzes the condensation of two molecules of acetyl-CoA to produce acetoacetyl-CoA. The chain is Acetyl-CoA acetyltransferase 1 from Arabidopsis thaliana (Mouse-ear cress).